The sequence spans 225 residues: Mitochondrial inner membrane protease ATP23 (225 aa).

Position 124 (His124) interacts with a divalent metal cation. Glu125 is a catalytic residue. His128 is an a divalent metal cation binding site.

It belongs to the peptidase M76 family.

The protein resides in the mitochondrion inner membrane. Its function is as follows. Has a dual role in the assembly of mitochondrial ATPase. Acts as a protease that removes N-terminal residues of mitochondrial ATPase CF(0) subunit 6 at the intermembrane space side. Also involved in the correct assembly of the membrane-embedded ATPase CF(0) particle, probably mediating association of subunit 6 with the subunit 9 ring. The polypeptide is Mitochondrial inner membrane protease ATP23 (ATP23) (Candida glabrata (strain ATCC 2001 / BCRC 20586 / JCM 3761 / NBRC 0622 / NRRL Y-65 / CBS 138) (Yeast)).